We begin with the raw amino-acid sequence, 574 residues long: Alpha-farnesene synthase (574 aa).

Residues aspartate 326, aspartate 330, and glutamate 478 each contribute to the Mn(2+) site. The DDXXD motif signature appears at 326–330 (DDIYD).

This sequence belongs to the terpene synthase family. Tpsd subfamily. Requires Mn(2+) as cofactor.

The protein localises to the cytoplasm. It carries out the reaction (2E,6E)-farnesyl diphosphate = (3E,6E)-alpha-farnesene + diphosphate. Its pathway is terpene metabolism; oleoresin biosynthesis. Functionally, involved in sesquiterpene (C15) biosynthesis. The major product is alpha-farnesene. The protein is Alpha-farnesene synthase (PT5) of Pinus taeda (Loblolly pine).